The sequence spans 1014 residues: Klotho (1014 aa).

A signal peptide spans 1 to 35; the sequence is MPASAPPRRPRPPPPSLSLSLLLVLLGLAGRRLRA. At 36-983 the chain is on the extracellular side; that stretch reads EPGDGAQTWA…ECSFFHTRKP (948 aa). Glycosyl hydrolase-1 regions lie at residues 59–508 and 517–955; these read FQGT…KNGF and LEGT…SNGF. 6 N-linked (GlcNAc...) asparagine glycosylation sites follow: asparagine 161, asparagine 285, asparagine 346, asparagine 609, asparagine 614, and asparagine 696. A helical membrane pass occupies residues 984–1004; it reads LVAFIAFLFFAFIVSLSLIFY. At 1005 to 1014 the chain is on the cytoplasmic side; that stretch reads YSKKGRRRYQ.

This sequence belongs to the glycosyl hydrolase 1 family. Klotho subfamily. In terms of assembly, homodimer. Interacts with FGF23 and FGFR1.

It localises to the cell membrane. It is found in the apical cell membrane. Its subcellular location is the secreted. It catalyses the reaction a beta-D-glucuronoside + H2O = D-glucuronate + an alcohol. Functionally, may have weak glycosidase activity towards glucuronylated steroids. However, it lacks essential active site Glu residues at positions 241 and 874, suggesting it may be inactive as a glycosidase in vivo. May be involved in the regulation of calcium and phosphorus homeostasis by inhibiting the synthesis of active vitamin D. Essential factor for the specific interaction between FGF23 and FGFR1. Its function is as follows. The Klotho peptide generated by cleavage of the membrane-bound isoform may be an anti-aging circulating hormone which would extend life span by inhibiting insulin/IGF1 signaling. This chain is Klotho (KL), found in Macaca fascicularis (Crab-eating macaque).